The primary structure comprises 540 residues: Anti-sigma-I factor RsgI7 (540 aa).

The region spanning methionine 1–arginine 48 is the RsgI N-terminal anti-sigma domain. Residues methionine 1 to threonine 50 are Cytoplasmic-facing. The helical transmembrane segment at leucine 51–serine 73 threads the bilayer. Topologically, residues tyrosine 74–cysteine 540 are extracellular. Basic and acidic residues-rich tracts occupy residues aspartate 238–asparagine 256, serine 319–lysine 329, asparagine 338–serine 351, valine 359–glycine 370, and serine 398–lysine 419. Disordered stretches follow at residues aspartate 238–tyrosine 429 and glutamine 481–cysteine 540. Residues lysine 451–threonine 501 adopt a coiled-coil conformation.

In terms of assembly, interacts (via RsgI N-terminal anti-sigma domain) with SigI7.

It is found in the cell membrane. Its function is as follows. Anti-sigma factor for SigI7. Negatively regulates SigI7 activity through direct interaction. The chain is Anti-sigma-I factor RsgI7 from Acetivibrio thermocellus (strain ATCC 27405 / DSM 1237 / JCM 9322 / NBRC 103400 / NCIMB 10682 / NRRL B-4536 / VPI 7372) (Clostridium thermocellum).